Consider the following 117-residue polypeptide: Immunoglobulin heavy variable 3-74 (117 aa).

A signal peptide spans 1 to 19 (MEFGLSWVFLVAILKGVQC). Residues 20 to 44 (EVQLVESGGGLVQPGGSLRLSCAAS) are framework-1. Residues 20–117 (EVQLVESGGG…EDTAVYYCAR (98 aa)) form the Ig-like domain. A disulfide bond links Cys-41 and Cys-115. Residues 45 to 52 (GFTFSSYW) are complementarity-determining-1. A framework-2 region spans residues 53 to 69 (MHWVRQAPGKGLVWVSR). Residues 70–77 (INSDGSST) are complementarity-determining-2. The framework-3 stretch occupies residues 78–115 (SYADSVKGRFTISRDNAKNTLYLQMNSLRAEDTAVYYC). The tract at residues 116-117 (AR) is complementarity-determining-3.

In terms of assembly, immunoglobulins are composed of two identical heavy chains and two identical light chains; disulfide-linked.

Its subcellular location is the secreted. The protein resides in the cell membrane. Its function is as follows. V region of the variable domain of immunoglobulin heavy chains that participates in the antigen recognition. Immunoglobulins, also known as antibodies, are membrane-bound or secreted glycoproteins produced by B lymphocytes. In the recognition phase of humoral immunity, the membrane-bound immunoglobulins serve as receptors which, upon binding of a specific antigen, trigger the clonal expansion and differentiation of B lymphocytes into immunoglobulins-secreting plasma cells. Secreted immunoglobulins mediate the effector phase of humoral immunity, which results in the elimination of bound antigens. The antigen binding site is formed by the variable domain of one heavy chain, together with that of its associated light chain. Thus, each immunoglobulin has two antigen binding sites with remarkable affinity for a particular antigen. The variable domains are assembled by a process called V-(D)-J rearrangement and can then be subjected to somatic hypermutations which, after exposure to antigen and selection, allow affinity maturation for a particular antigen. The chain is Immunoglobulin heavy variable 3-74 from Homo sapiens (Human).